The chain runs to 155 residues: Ribosomal RNA large subunit methyltransferase H (155 aa).

Residues L72, G103, and 122 to 127 (LSPLTL) contribute to the S-adenosyl-L-methionine site.

Belongs to the RNA methyltransferase RlmH family. In terms of assembly, homodimer.

The protein localises to the cytoplasm. The enzyme catalyses pseudouridine(1915) in 23S rRNA + S-adenosyl-L-methionine = N(3)-methylpseudouridine(1915) in 23S rRNA + S-adenosyl-L-homocysteine + H(+). Functionally, specifically methylates the pseudouridine at position 1915 (m3Psi1915) in 23S rRNA. The polypeptide is Ribosomal RNA large subunit methyltransferase H (Histophilus somni (strain 129Pt) (Haemophilus somnus)).